The following is a 284-amino-acid chain: ADP-polyphosphate phosphotransferase 3 (284 aa).

Basic and acidic residues-rich tracts occupy residues 1 to 22 and 260 to 277; these read MDKH…RKSA and DLGK…DTRR. Disordered regions lie at residues 1–32 and 260–284; these read MDKH…TRSG and DLGK…PNLF.

The protein belongs to the polyphosphate kinase 2 (PPK2) family. Class I subfamily.

The enzyme catalyses [phosphate](n) + ATP = [phosphate](n+1) + ADP. The catalysed reaction is [phosphate](n) + GTP = [phosphate](n+1) + GDP. Its function is as follows. Uses inorganic polyphosphate (polyP) as a donor to convert ADP to ATP. Can also convert GDP to GTP, with lower efficiency. This Rhizobium meliloti (strain 1021) (Ensifer meliloti) protein is ADP-polyphosphate phosphotransferase 3.